Reading from the N-terminus, the 473-residue chain is Photosystem II CP43 reaction center protein (473 aa).

A propeptide spanning residues 1-14 (MKNLYSLRRFYHVE) is cleaved from the precursor. Thr15 carries the N-acetylthreonine modification. Thr15 is subject to Phosphothreonine. Transmembrane regions (helical) follow at residues 69 to 93 (LFEVAHFVPEKPMYEQGLILLPHLA), 134 to 155 (LVGPETLEESFPFFGYVWKDKN), 178 to 200 (KAMYFGGIYDTWAPGGGDVRIIS), 255 to 275 (KPWAWARRAFVWSGEAYLSYS), and 291 to 312 (WFNTTAYPSEFYGPTGPEASQS). Position 367 (Glu367) interacts with [CaMn4O5] cluster. Residues 447–471 (RARAAAAGFEKGIDRDNEPVLSMRP) traverse the membrane as a helical segment.

Belongs to the PsbB/PsbC family. PsbC subfamily. As to quaternary structure, PSII is composed of 1 copy each of membrane proteins PsbA, PsbB, PsbC, PsbD, PsbE, PsbF, PsbH, PsbI, PsbJ, PsbK, PsbL, PsbM, PsbT, PsbX, PsbY, PsbZ, Psb30/Ycf12, at least 3 peripheral proteins of the oxygen-evolving complex and a large number of cofactors. It forms dimeric complexes. Binds multiple chlorophylls and provides some of the ligands for the Ca-4Mn-5O cluster of the oxygen-evolving complex. It may also provide a ligand for a Cl- that is required for oxygen evolution. PSII binds additional chlorophylls, carotenoids and specific lipids. is required as a cofactor.

It localises to the plastid. The protein resides in the chloroplast thylakoid membrane. One of the components of the core complex of photosystem II (PSII). It binds chlorophyll and helps catalyze the primary light-induced photochemical processes of PSII. PSII is a light-driven water:plastoquinone oxidoreductase, using light energy to abstract electrons from H(2)O, generating O(2) and a proton gradient subsequently used for ATP formation. The chain is Photosystem II CP43 reaction center protein from Chlorella vulgaris (Green alga).